Reading from the N-terminus, the 369-residue chain is MGGFTKEAKKGYIEVAFNGSLASILLDTQFSVPAKGVTAIFGPPGCGKTTLARCIAGVQRLPNGFCAIDGEIWQDETTFRPPHLRRVAYVFQLPILSSHLSVRRTLLYNASNSEPTLIDFDGVVELLGLAPLLERTPSHLSKTERQRLALGSALLGQPRLLLLDDPLIVRDRSAKCEILPFLERILQSLALPMIYISHDITDIERLADHLVMMKDGTVTAAGPLNVTQSDPALASRSEAAICLDTMVGGYDGRYGLVKLRLKSARFLIPAVPLRPGARLRLRIAAGDVSIACEPPRASSILNVFRARITASLPHGDAEVTLVLTLETGHSGVPLLARITRRSFDALRLSIGAEVFAEELCGKLGDDGMR.

Positions 10-240 (KGYIEVAFNG…PALASRSEAA (231 aa)) constitute an ABC transporter domain. Residue 42-49 (GPPGCGKT) coordinates ATP. The Mop domain occupies 297–367 (ASSILNVFRA…ELCGKLGDDG (71 aa)).

It belongs to the ABC transporter superfamily. Molybdate importer (TC 3.A.1.8) family. In terms of assembly, the complex is composed of two ATP-binding proteins (ModC), two transmembrane proteins (ModB) and a solute-binding protein (ModA).

It is found in the cell inner membrane. It carries out the reaction molybdate(out) + ATP + H2O = molybdate(in) + ADP + phosphate + H(+). Part of the ABC transporter complex ModABC involved in molybdenum import. Responsible for energy coupling to the transport system. The protein is Molybdenum import ATP-binding protein ModC 1 of Bradyrhizobium diazoefficiens (strain JCM 10833 / BCRC 13528 / IAM 13628 / NBRC 14792 / USDA 110).